A 261-amino-acid chain; its full sequence is Kallikrein 1-related peptidase b16 (261 aa).

The N-terminal stretch at 1–18 (MWFLILFLALSLGGIDAA) is a signal peptide. The propeptide at 19–24 (PPVQSR) is activation peptide. Residues 25-258 (IVGGFKCEKN…FNSWIKDTMM (234 aa)) enclose the Peptidase S1 domain. Disulfide bonds link C31-C173, C50-C66, C152-C219, C184-C198, and C209-C234. The active-site Charge relay system is the H65. N102 carries an N-linked (GlcNAc...) asparagine glycan. D120 (charge relay system) is an active-site residue. S213 functions as the Charge relay system in the catalytic mechanism.

Belongs to the peptidase S1 family. Kallikrein subfamily.

The enzyme catalyses Cleavage of the Leu-|-Leu bond in synthetic tetradecapeptide renin substrate, to produce angiotensin I, but not active on natural angiotensinogen. Also hydrolyzes Bz-Arg-p-nitroanilide.. The chain is Kallikrein 1-related peptidase b16 (Klk1b16) from Mus musculus (Mouse).